A 178-amino-acid chain; its full sequence is Cell division protein SepF (178 aa).

The segment covering 21 to 46 (YESEQSVATHHDEERPQAQEREERRA) has biased composition (basic and acidic residues). A disordered region spans residues 21–65 (YESEQSVATHHDEERPQAQEREERRAPAPVREVVREMPTVDAEEE).

This sequence belongs to the SepF family. Homodimer. Interacts with FtsZ.

The protein resides in the cytoplasm. In terms of biological role, cell division protein that is part of the divisome complex and is recruited early to the Z-ring. Probably stimulates Z-ring formation, perhaps through the cross-linking of FtsZ protofilaments. Its function overlaps with FtsA. This chain is Cell division protein SepF, found in Paenarthrobacter aurescens (strain TC1).